The sequence spans 151 residues: Small ribosomal subunit protein uS15y (151 aa).

The protein belongs to the universal ribosomal protein uS15 family.

In Arabidopsis thaliana (Mouse-ear cress), this protein is Small ribosomal subunit protein uS15y (RPS13B).